The sequence spans 207 residues: Thiamine-phosphate synthase (207 aa).

Residues glutamine 35–lysine 39 and asparagine 67 each bind 4-amino-2-methyl-5-(diphosphooxymethyl)pyrimidine. Residues aspartate 68 and aspartate 86 each contribute to the Mg(2+) site. Threonine 105 contributes to the 4-amino-2-methyl-5-(diphosphooxymethyl)pyrimidine binding site. Residue serine 132 to threonine 134 participates in 2-[(2R,5Z)-2-carboxy-4-methylthiazol-5(2H)-ylidene]ethyl phosphate binding. Lysine 135 is a 4-amino-2-methyl-5-(diphosphooxymethyl)pyrimidine binding site. Residue glycine 162 coordinates 2-[(2R,5Z)-2-carboxy-4-methylthiazol-5(2H)-ylidene]ethyl phosphate.

It belongs to the thiamine-phosphate synthase family. Mg(2+) is required as a cofactor.

It carries out the reaction 2-[(2R,5Z)-2-carboxy-4-methylthiazol-5(2H)-ylidene]ethyl phosphate + 4-amino-2-methyl-5-(diphosphooxymethyl)pyrimidine + 2 H(+) = thiamine phosphate + CO2 + diphosphate. It catalyses the reaction 2-(2-carboxy-4-methylthiazol-5-yl)ethyl phosphate + 4-amino-2-methyl-5-(diphosphooxymethyl)pyrimidine + 2 H(+) = thiamine phosphate + CO2 + diphosphate. The enzyme catalyses 4-methyl-5-(2-phosphooxyethyl)-thiazole + 4-amino-2-methyl-5-(diphosphooxymethyl)pyrimidine + H(+) = thiamine phosphate + diphosphate. It functions in the pathway cofactor biosynthesis; thiamine diphosphate biosynthesis; thiamine phosphate from 4-amino-2-methyl-5-diphosphomethylpyrimidine and 4-methyl-5-(2-phosphoethyl)-thiazole: step 1/1. In terms of biological role, condenses 4-methyl-5-(beta-hydroxyethyl)thiazole monophosphate (THZ-P) and 2-methyl-4-amino-5-hydroxymethyl pyrimidine pyrophosphate (HMP-PP) to form thiamine monophosphate (TMP). The sequence is that of Thiamine-phosphate synthase from Pseudomonas putida (strain W619).